Here is a 482-residue protein sequence, read N- to C-terminus: Glycogen synthase 2 (482 aa).

Lysine 18 is an ADP-alpha-D-glucose binding site.

It belongs to the glycosyltransferase 1 family. Bacterial/plant glycogen synthase subfamily.

The catalysed reaction is [(1-&gt;4)-alpha-D-glucosyl](n) + ADP-alpha-D-glucose = [(1-&gt;4)-alpha-D-glucosyl](n+1) + ADP + H(+). The protein operates within glycan biosynthesis; glycogen biosynthesis. In terms of biological role, synthesizes alpha-1,4-glucan chains using ADP-glucose. The polypeptide is Glycogen synthase 2 (Bradyrhizobium diazoefficiens (strain JCM 10833 / BCRC 13528 / IAM 13628 / NBRC 14792 / USDA 110)).